The chain runs to 139 residues: D-ribose pyranase (139 aa).

Histidine 20 (proton donor) is an active-site residue. Substrate is bound by residues aspartate 28, histidine 106, and 128-130 (YAN).

It belongs to the RbsD / FucU family. RbsD subfamily. In terms of assembly, homodecamer.

The protein localises to the cytoplasm. The enzyme catalyses beta-D-ribopyranose = beta-D-ribofuranose. It functions in the pathway carbohydrate metabolism; D-ribose degradation; D-ribose 5-phosphate from beta-D-ribopyranose: step 1/2. Its function is as follows. Catalyzes the interconversion of beta-pyran and beta-furan forms of D-ribose. This chain is D-ribose pyranase, found in Salmonella paratyphi B (strain ATCC BAA-1250 / SPB7).